The sequence spans 1097 residues: FHIP family protein GK23746 (1097 aa).

Residues 1–21 (MSWLRSSPLRQSLTRTTSSGN) show a composition bias toward polar residues. The interval 1–25 (MSWLRSSPLRQSLTRTTSSGNGIRP) is disordered. Ser-491 carries the phosphoserine modification. 3 disordered regions span residues 639 to 684 (DVSA…SGRR), 820 to 856 (NENS…RSAY), and 932 to 1042 (NNQQ…SEPV). Low complexity predominate over residues 641–654 (SASSGNGTGSVVVG). Ser-823 is modified (phosphoserine). Composition is skewed to low complexity over residues 824-852 (PLHQ…GAQQ) and 932-948 (NNQQ…SSSS). Polar residues predominate over residues 949-962 (AVTTCETSLSTQPH). Positions 973-985 (TTSSTISTSSGTT) are enriched in low complexity. Over residues 986-995 (AGSGGGGGSG) the composition is skewed to gly residues. Low complexity-rich tracts occupy residues 996 to 1006 (SNSSFSIGGST) and 1013 to 1022 (SNNTTNSSST).

Belongs to the FHIP family.

The sequence is that of FHIP family protein GK23746 from Drosophila willistoni (Fruit fly).